We begin with the raw amino-acid sequence, 330 residues long: Aspartate--ammonia ligase (330 aa).

This sequence belongs to the class-II aminoacyl-tRNA synthetase family. AsnA subfamily.

The protein localises to the cytoplasm. The catalysed reaction is L-aspartate + NH4(+) + ATP = L-asparagine + AMP + diphosphate + H(+). Its pathway is amino-acid biosynthesis; L-asparagine biosynthesis; L-asparagine from L-aspartate (ammonia route): step 1/1. In Escherichia coli O7:K1 (strain IAI39 / ExPEC), this protein is Aspartate--ammonia ligase.